We begin with the raw amino-acid sequence, 133 residues long: Mitochondrial import inner membrane translocase subunit TIM17-3 (133 aa).

The next 4 helical transmembrane spans lie at 15-35 (IVNA…VYHF), 63-83 (GGTF…LVRI), 90-105 (WNSI…VLSI), and 115-128 (SAVM…VLNP).

The protein belongs to the Tim17/Tim22/Tim23 family. As to quaternary structure, component of the TIM17:23 complex at least composed of TIM23, TIM17 and TIM50. The complex interacts with the TIM44 component of the PAM complex. In terms of tissue distribution, expressed in cotyledons, roots, flowers and leaves.

The protein resides in the mitochondrion inner membrane. Its function is as follows. Essential component of the TIM17:23 complex, a complex that mediates the translocation of transit peptide-containing proteins across the mitochondrial inner membrane. Links the inner and outer membranes. This Arabidopsis thaliana (Mouse-ear cress) protein is Mitochondrial import inner membrane translocase subunit TIM17-3 (TIM17-3).